Here is a 548-residue protein sequence, read N- to C-terminus: Chaperonin GroEL (548 aa).

ATP is bound by residues 30–33 (TLGP), Lys-51, 87–91 (DGTTT), Gly-415, 479–481 (NAA), and Asp-495.

This sequence belongs to the chaperonin (HSP60) family. Forms a cylinder of 14 subunits composed of two heptameric rings stacked back-to-back. Interacts with the co-chaperonin GroES.

The protein resides in the cytoplasm. It catalyses the reaction ATP + H2O + a folded polypeptide = ADP + phosphate + an unfolded polypeptide.. In terms of biological role, together with its co-chaperonin GroES, plays an essential role in assisting protein folding. The GroEL-GroES system forms a nano-cage that allows encapsulation of the non-native substrate proteins and provides a physical environment optimized to promote and accelerate protein folding. The protein is Chaperonin GroEL of Methylibium petroleiphilum (strain ATCC BAA-1232 / LMG 22953 / PM1).